The chain runs to 746 residues: Disintegrin and metalloproteinase domain-containing protein 18 (746 aa).

A signal peptide spans 1–16 (MFFLLALLTELGRLQA). Positions 17–183 (HVGSEGIFLH…QKKNLSKLLP (167 aa)) are excised as a propeptide. N-linked (GlcNAc...) asparagine glycans are attached at residues Asn36, Asn122, Asn149, Asn156, Asn177, and Asn294. Residues 177–687 (NLSKLLPQYL…EKGYNAHWNN (511 aa)) lie on the Extracellular side of the membrane. The Peptidase M12B domain occupies 184-381 (QYLEIYIIVE…FEAKCLQKLS (198 aa)). Disulfide bonds link Cys293–Cys376, Cys335–Cys360, Cys337–Cys342, and Cys450–Cys471. 4 N-linked (GlcNAc...) asparagine glycosylation sites follow: Asn359, Asn465, Asn611, and Asn625. The region spanning 390-479 (QPVCGNGILE…DCVPDTYALN (90 aa)) is the Disintegrin domain. The region spanning 620–654 (TGYNCNTTTKCKGKGICNNFGNCQCFPGHKPPDCK) is the EGF-like domain. Intrachain disulfides connect Cys624–Cys636, Cys630–Cys642, and Cys644–Cys653. A helical membrane pass occupies residues 688–708 (WFILSFYIVLPFFIIFTIVIF). Topologically, residues 709-746 (KRNEIRKLCNRENTELIHPLYQKAMMWNINIAQNFRSK) are cytoplasmic.

In terms of processing, the prodomain and the metalloprotease-like domain are cleaved during the epididymal maturation of the spermatozoa. Expressed predominantly in adult and prepubertal testis.

Its subcellular location is the membrane. Functionally, sperm surface membrane protein that may be involved in spermatogenesis and fertilization. This is a non catalytic metalloprotease-like protein. This chain is Disintegrin and metalloproteinase domain-containing protein 18 (ADAM18), found in Macaca fascicularis (Crab-eating macaque).